A 1315-amino-acid chain; its full sequence is Tetratricopeptide repeat protein 21B (1315 aa).

TPR repeat units follow at residues 108 to 141 (RKAL…PHDS), 145 to 178 (PILK…GNDI), 192 to 225 (QNYS…QLAL), 285 to 323 (AQLF…TPQQ), 324 to 357 (AEIA…NESN), 492 to 525 (PQAV…SPSY), 563 to 596 (PLYH…PGMR), 616 to 649 (LSIF…FSGT), 721 to 754 (PRSF…NPKD), 756 to 788 (TLAR…GQQN), 790 to 821 (LCYD…EPVS), 830 to 863 (GRSQ…QARI), 883 to 916 (AEIC…CETD), 918 to 950 (KIML…DQDN), 951 to 984 (EPAT…KPDN), 1022 to 1055 (PGFQ…SDWG), 1196 to 1229 (EKSW…NRSC), 1231 to 1263 (KAYE…SNQT), and 1265 to 1298 (PAVG…HPTY).

The protein belongs to the TTC21 family. Component of the IFT complex A (IFT-A) complex. IFT-A complex is divided into a core subcomplex composed of IFT122:IFT140:WDR19 which is associated with TULP3 and a peripheral subcomplex composed of IFT43:WDR35:TTC21B. Interacts directy with WDR35 and TTC21B. Interacts with TTC25.

Its subcellular location is the cytoplasm. The protein localises to the cytoskeleton. The protein resides in the cilium axoneme. Functionally, component of the IFT complex A (IFT-A), a complex required for retrograde ciliary transport and entry into cilia of G protein-coupled receptors (GPCRs). Essential for retrograde trafficking of IFT-1, IFT-B and GPCRs. Negatively modulates the SHH signal transduction. This is Tetratricopeptide repeat protein 21B (Ttc21b) from Mus musculus (Mouse).